Consider the following 103-residue polypeptide: Pyrimidine/purine nucleoside phosphorylase (103 aa).

It belongs to the nucleoside phosphorylase PpnP family.

The enzyme catalyses a purine D-ribonucleoside + phosphate = a purine nucleobase + alpha-D-ribose 1-phosphate. It carries out the reaction adenosine + phosphate = alpha-D-ribose 1-phosphate + adenine. The catalysed reaction is cytidine + phosphate = cytosine + alpha-D-ribose 1-phosphate. It catalyses the reaction guanosine + phosphate = alpha-D-ribose 1-phosphate + guanine. The enzyme catalyses inosine + phosphate = alpha-D-ribose 1-phosphate + hypoxanthine. It carries out the reaction thymidine + phosphate = 2-deoxy-alpha-D-ribose 1-phosphate + thymine. The catalysed reaction is uridine + phosphate = alpha-D-ribose 1-phosphate + uracil. It catalyses the reaction xanthosine + phosphate = alpha-D-ribose 1-phosphate + xanthine. Catalyzes the phosphorolysis of diverse nucleosides, yielding D-ribose 1-phosphate and the respective free bases. Can use uridine, adenosine, guanosine, cytidine, thymidine, inosine and xanthosine as substrates. Also catalyzes the reverse reactions. This chain is Pyrimidine/purine nucleoside phosphorylase, found in Sulfurimonas denitrificans (strain ATCC 33889 / DSM 1251) (Thiomicrospira denitrificans (strain ATCC 33889 / DSM 1251)).